A 370-amino-acid polypeptide reads, in one-letter code: Protein Wnt-1 (370 aa).

Residues 1–19 (MRVLALLLAVKAACVLLVS) form the signal peptide. Asn28 carries an N-linked (GlcNAc...) asparagine glycan. Disulfide bonds link Cys92–Cys103, Cys142–Cys150, Cys152–Cys169, Cys217–Cys231, and Cys219–Cys226. A lipid anchor (O-palmitoleoyl serine; by PORCN) is attached at Ser223. Residues 261–282 (GSNRASHRADPRHLEPENPAHK) are disordered. Residues 267–280 (HRADPRHLEPENPA) show a composition bias toward basic and acidic residues. 6 disulfide bridges follow: Cys299/Cys330, Cys315/Cys325, Cys329/Cys369, Cys345/Cys360, Cys347/Cys357, and Cys352/Cys353. N-linked (GlcNAc...) asparagine glycosylation is present at Asn316. Asn359 carries N-linked (GlcNAc...) asparagine glycosylation.

The protein belongs to the Wnt family. Palmitoleoylation is required for efficient binding to frizzled receptors. Palmitoleoylation is necessary for proper trafficking to cell surface. Depalmitoleoylated by NOTUM, leading to inhibit Wnt signaling pathway.

The protein localises to the secreted. The protein resides in the extracellular space. It is found in the extracellular matrix. Functionally, ligand for members of the frizzled family of seven transmembrane receptors. Acts in the canonical Wnt signaling pathway by promoting beta-catenin-dependent transcriptional activation. Involved in neurogenesis. Performs a partially redundant function with wnt10b in the formation of the midbrain-hindbrain boundary (MHB) organizer. In the hindbrain, mediates lateral inhibition of boundary cell specification, probably via up-regulation of proneural and Delta gene expression in non-boundary cells; localized expression of wnt1 in boundary cells is maintained via rfng-mediated modulation of Notch activity. This chain is Protein Wnt-1 (wnt1), found in Danio rerio (Zebrafish).